The chain runs to 344 residues: Methionine import ATP-binding protein MetN (344 aa).

In terms of domain architecture, ABC transporter spans 2-241; sequence IELKNIGKQF…PTTQLAQQFI (240 aa). 38-45 serves as a coordination point for ATP; the sequence is GASGAGKS.

It belongs to the ABC transporter superfamily. Methionine importer (TC 3.A.1.24) family. In terms of assembly, the complex is composed of two ATP-binding proteins (MetN), two transmembrane proteins (MetI) and a solute-binding protein (MetQ).

Its subcellular location is the cell inner membrane. It carries out the reaction L-methionine(out) + ATP + H2O = L-methionine(in) + ADP + phosphate + H(+). The catalysed reaction is D-methionine(out) + ATP + H2O = D-methionine(in) + ADP + phosphate + H(+). Part of the ABC transporter complex MetNIQ involved in methionine import. Responsible for energy coupling to the transport system. The polypeptide is Methionine import ATP-binding protein MetN (Haemophilus ducreyi (strain 35000HP / ATCC 700724)).